Reading from the N-terminus, the 118-residue chain is Large ribosomal subunit protein bL20 (118 aa).

The protein belongs to the bacterial ribosomal protein bL20 family.

In terms of biological role, binds directly to 23S ribosomal RNA and is necessary for the in vitro assembly process of the 50S ribosomal subunit. It is not involved in the protein synthesizing functions of that subunit. The chain is Large ribosomal subunit protein bL20 from Fervidobacterium nodosum (strain ATCC 35602 / DSM 5306 / Rt17-B1).